A 369-amino-acid chain; its full sequence is Flagellar P-ring protein 2 (369 aa).

An N-terminal signal peptide occupies residues 1-24; sequence MCAFAAILSLLSVLLMATSRSSDA.

This sequence belongs to the FlgI family. As to quaternary structure, the basal body constitutes a major portion of the flagellar organelle and consists of four rings (L,P,S, and M) mounted on a central rod.

Its subcellular location is the periplasm. It is found in the bacterial flagellum basal body. In terms of biological role, assembles around the rod to form the L-ring and probably protects the motor/basal body from shearing forces during rotation. The chain is Flagellar P-ring protein 2 from Burkholderia thailandensis (strain ATCC 700388 / DSM 13276 / CCUG 48851 / CIP 106301 / E264).